The chain runs to 494 residues: Glutamyl-tRNA(Gln) amidotransferase subunit A (494 aa).

Catalysis depends on charge relay system residues lysine 81 and serine 156. Serine 180 serves as the catalytic Acyl-ester intermediate.

The protein belongs to the amidase family. GatA subfamily. In terms of assembly, heterotrimer of A, B and C subunits.

It catalyses the reaction L-glutamyl-tRNA(Gln) + L-glutamine + ATP + H2O = L-glutaminyl-tRNA(Gln) + L-glutamate + ADP + phosphate + H(+). Allows the formation of correctly charged Gln-tRNA(Gln) through the transamidation of misacylated Glu-tRNA(Gln) in organisms which lack glutaminyl-tRNA synthetase. The reaction takes place in the presence of glutamine and ATP through an activated gamma-phospho-Glu-tRNA(Gln). The sequence is that of Glutamyl-tRNA(Gln) amidotransferase subunit A from Mycobacterium tuberculosis (strain ATCC 25177 / H37Ra).